The chain runs to 624 residues: Phosphatidylinositol 4-kinase lsb6 (624 aa).

Positions 1–31 (MESTFHSDTLDSFPNYQENSLNTNEEQTNPL) are enriched in polar residues. The disordered stretch occupies residues 1–53 (MESTFHSDTLDSFPNYQENSLNTNEEQTNPLESLRDGWASSNSSSSSSLLLPD). Positions 40-51 (SSNSSSSSSLLL) are enriched in low complexity. Positions 145 to 520 (GVFPVLISKG…LLELPNLYVV (376 aa)) constitute a PI3K/PI4K catalytic domain. The interval 151–157 (ISKGSSG) is G-loop. A catalytic loop region spans residues 346-354 (RNTDRNLDN). An activation loop region spans residues 409–429 (AIDNSLAFPYKHPDSWRSFPY).

The protein belongs to the PI3/PI4-kinase family. The cofactor is Mg(2+). Mn(2+) is required as a cofactor.

Its subcellular location is the cell membrane. The protein resides in the vacuole membrane. It localises to the golgi apparatus membrane. The catalysed reaction is a 1,2-diacyl-sn-glycero-3-phospho-(1D-myo-inositol) + ATP = a 1,2-diacyl-sn-glycero-3-phospho-(1D-myo-inositol 4-phosphate) + ADP + H(+). Its function is as follows. May play a role in endocytic and/or exocytic pathways. This is Phosphatidylinositol 4-kinase lsb6 (lsb6) from Schizosaccharomyces pombe (strain 972 / ATCC 24843) (Fission yeast).